Here is a 227-residue protein sequence, read N- to C-terminus: MELVFIRHGQSEWNAKNLFTGWRDVKLSEQGLAEAAAAGKKLKENGYEFDIAFTSVLTRAIKTCNIVLEESDQLFVPQIKTWRLNERHYGQLQGLDKKQTAEQYGDEQVRIWRRSYDTLPPLLDKDDEFSAHKDRRYAHLPADVVPDGENLKVTLERVLPFWEDQIAPAILSGKRVLVAAHGNSLRALAKHIEGISDKDIMGLEIPTGQPLVYKLDDNLKVLEKFYL.

Residues Arg7–Asn14, Thr20–Gly21, Arg59, Glu86–Tyr89, Lys97, Arg113–Arg114, and Gly182–Asn183 each bind substrate. His8 (tele-phosphohistidine intermediate) is an active-site residue. The Proton donor/acceptor role is filled by Glu86.

The protein belongs to the phosphoglycerate mutase family. BPG-dependent PGAM subfamily. In terms of assembly, homodimer.

The enzyme catalyses (2R)-2-phosphoglycerate = (2R)-3-phosphoglycerate. It functions in the pathway carbohydrate degradation; glycolysis; pyruvate from D-glyceraldehyde 3-phosphate: step 3/5. In terms of biological role, catalyzes the interconversion of 2-phosphoglycerate and 3-phosphoglycerate. The chain is 2,3-bisphosphoglycerate-dependent phosphoglycerate mutase from Neisseria meningitidis serogroup C / serotype 2a (strain ATCC 700532 / DSM 15464 / FAM18).